The chain runs to 74 residues: Imcroporin (74 aa).

The first 22 residues, 1-22 (MKFQYLLAVFLIVLVVTDHCQA), serve as a signal peptide directing secretion. At K39 the chain carries Lysine amide; partial. The propeptide occupies 45–74 (QLEARFEPKQRNFRKRELDFEKLFANMPDY).

It belongs to the non-disulfide-bridged peptide (NDBP) superfamily. Short antimicrobial peptide (group 4) family. As to expression, expressed by the venom gland.

The protein resides in the secreted. Its subcellular location is the target cell membrane. Its function is as follows. Has potent antibacterial activity against Gram-positive bacteria M.luteus, B.thuringiensis, S.aureus and B.subtilis, but not Gram-negative bacteria. Shows a weak cytotoxicity effect against mammalian cell lines and relatively low hemolytic activity against human erythrocytes. The chain is Imcroporin from Isometrus maculatus (Lesser brown scorpion).